The primary structure comprises 626 residues: MNGNRPNYISLIFAALVILSLFWLVRSFYFDTSAPSKMSFSDFIQMAYEEPTRIAEVVVRDDGILRVTTKRGEYYEIYAPWFMQDSETIKVLSEKGVRVTGEKGVSSSFWVNVIGNVIFIGFLLFMFFFMMRTISGRNNQAFTFTKSRAQMNRPGQARVTFKDVAGVDEAVEELKETVLFLKDPGRFSKIGARMPKGILLVGPPGTGKTLLARAVAGEANVPFFHISGSDFVELFVGVGAARVRDLFNQAKANAPCIVFIDEIDAVGRHRGAGLGGGHDEREQTLNQLLVEMDGFDVRQGIVVMAATNRPDILDPALLRPGRFDKKVVLDTPDVRGREEILKIHARNKPIAEDVDIRVLAQRTTGFVGADLENLVNEAALLAARNGRDKIKMEDFEEAIDRVIAGPARKSRVISPREKRIVAYHEVGHAIVSSLLPNADPVHRISIIPRGYRALGYTLQLPAEDRYLVTKQELLDQITGLLGGRAAEELIFQEVTTGAASDIERATELARRMVCQFGMSDKLGPLSWGKTEQEIFLGKELTRMRNYSEEVASEIDEEVRKIVTESYDRAKEILTKYHKQLDELVELLLEREVLEGEELRKILKTELGEEMVNHDKLRAAAGSEQDS.

Residues 1–7 are Cytoplasmic-facing; it reads MNGNRPN. A helical transmembrane segment spans residues 8–28; the sequence is YISLIFAALVILSLFWLVRSF. The Periplasmic segment spans residues 29-108; it reads YFDTSAPSKM…VTGEKGVSSS (80 aa). The chain crosses the membrane as a helical span at residues 109–129; that stretch reads FWVNVIGNVIFIGFLLFMFFF. The Cytoplasmic portion of the chain corresponds to 130–626; the sequence is MMRTISGRNN…RAAAGSEQDS (497 aa). ATP is bound at residue 202–209; the sequence is GPPGTGKT. H424 is a binding site for Zn(2+). Residue E425 is part of the active site. Residues H428 and D501 each coordinate Zn(2+).

It in the central section; belongs to the AAA ATPase family. In the C-terminal section; belongs to the peptidase M41 family. Homohexamer. Zn(2+) serves as cofactor.

It localises to the cell inner membrane. In terms of biological role, acts as a processive, ATP-dependent zinc metallopeptidase for both cytoplasmic and membrane proteins. Plays a role in the quality control of integral membrane proteins. The sequence is that of ATP-dependent zinc metalloprotease FtsH from Pseudothermotoga lettingae (strain ATCC BAA-301 / DSM 14385 / NBRC 107922 / TMO) (Thermotoga lettingae).